Reading from the N-terminus, the 393-residue chain is Pyrin and HIN domain-containing protein 1-like (393 aa).

One can recognise a Pyrin domain in the interval 1 to 87 (MVNEYKRIVL…ANKLKNEKAK (87 aa)). The interval 82–188 (KNEKAKAKRK…TPTRSSSRIL (107 aa)) is disordered. Positions 87 to 102 (KAKRKGKGKRKTAAKR) are enriched in basic residues. 2 stretches are compositionally biased toward polar residues: residues 108-118 (PSTSQPMSTTN) and 126-151 (GRST…AIQI). The segment covering 152–169 (SPTIASSSGQTSSRSSET) has biased composition (low complexity). The segment covering 170 to 186 (LQSIIQSPETPTRSSSR) has biased composition (polar residues). One can recognise an HIN-200 domain in the interval 219-393 (NVPKEPSEEN…NPGDKLRLML (175 aa)).

The protein belongs to the HIN-200 family.

The protein resides in the nucleus. The chain is Pyrin and HIN domain-containing protein 1-like from Mus musculus (Mouse).